Consider the following 21-residue polypeptide: Alpha-fibrinogenase A1 (21 aa).

Belongs to the peptidase S1 family. Snake venom subfamily. Monomer. Expressed by the venom gland.

Its subcellular location is the secreted. With respect to regulation, inhibited by PMSF, bovine aprotinin (APR), and soybean trypsin inhibitor (STI). Is not inhibited by EDTA, beta-mercaptoethanol, and high temperature (85 degrees Celsius). Its function is as follows. Snake venom serine protease that completely cleaves fibrinogen Aalpha chain (FGA), partially cleaves Bbeta chain (FGB) and has no activity on gamma chain. Is more potent that A2 and A3 alpha-fibrinogenases. Very active within 5 minutes. This chain is Alpha-fibrinogenase A1, found in Crotalus atrox (Western diamondback rattlesnake).